Consider the following 3902-residue polypeptide: Hybrid PKS-NRPS synthetase pynA (3902 aa).

A disordered region spans residues 1-25 (MDTPLSSSEISPRFSNTVPSSVSSM). Residues 29–441 (ADPSVIVGLA…GTNAHVILDA (413 aa)) enclose the Ketosynthase family 3 (KS3) domain. Active-site for beta-ketoacyl synthase activity residues include cysteine 201, histidine 324, and histidine 362. Residues 555-868 (VFTGQGAQWF…PYLASLTRGV (314 aa)) are malonyl-CoA:ACP transacylase (MAT) domain. Serine 647 acts as the For malonyltransferase activity in catalysis. Positions 945-1080 (HSILGARMPG…GLVSVETNAL (136 aa)) are N-terminal hotdog fold. The interval 945 to 1256 (HSILGARMPG…LEVTALGSDK (312 aa)) is dehydratase (DH) domain. Positions 945-1258 (HSILGARMPG…VTALGSDKTD (314 aa)) constitute a PKS/mFAS DH domain. The active-site Proton acceptor; for dehydratase activity is the histidine 977. The C-terminal hotdog fold stretch occupies residues 1100-1258 (QESIPAETLY…VTALGSDKTD (159 aa)). Aspartate 1164 functions as the Proton donor; for dehydratase activity in the catalytic mechanism. The tract at residues 1629–1945 (GLLETLVFED…MGKHTGKVVL (317 aa)) is enoyl reductase (ER) domain. Residues 1971–2143 (TYLLVGGLGG…AGTTMNCGMI (173 aa)) form a ketoreductase (KR) domain region. A Carrier 1 domain is found at 2251-2328 (ERTTLVLSAF…ALVTKASGLI (78 aa)). At serine 2288 the chain carries O-(pantetheine 4'-phosphoryl)serine. Over residues 2337–2350 (KAENVDNEGAKGNE) the composition is skewed to basic and acidic residues. The disordered stretch occupies residues 2337–2364 (KAENVDNEGAKGNEDQEVETQQGQLNQP). The tract at residues 2374 to 2816 (VPMSSFQQRL…AEVNLCGALE (443 aa)) is condensation (C) domain 7. Positions 2836–3248 (SVGVCQRIME…NGLLTFKGRI (413 aa)) are adenylation (A) domain 8. Positions 3391–3467 (GDDAEILQGV…AIAGMIQKQL (77 aa)) constitute a Carrier 2 domain. Serine 3427 carries the post-translational modification O-(pantetheine 4'-phosphoryl)serine. The interval 3515–3774 (LTGIDTFIGL…VDFLPVDALT (260 aa)) is thioesterase (TE) domain.

In the C-terminal section; belongs to the NRP synthetase family.

Its pathway is secondary metabolite biosynthesis. Hybrid PKS-NRPS synthetase; part of the gene cluster that mediates the biosynthesis of pyranonigrins, a family of antioxidative compounds. The first step of pyranonigrins biosynthesis is performed by the hybrid PKS-NRPS synthetase that condenses 6 malonyl-CoA units to an acetyl starter unit, to form a 1,3,5-trioxotetradecane-6,8-dienyl-ACP. The enoyl reductase (ER) domain of pynA is likely to be functional during the first two rounds of polyketide chain extension, to generate the saturated C-C bonds of the alkyl side chain. PynA subsequently forms the amide bond between the acyl chain and L-serine. Although pynA has a terminal reductase domain, it appears to require the thioesterase pynI for the release of the straight-chain intermediate from pynA via the formation of a tetramic acid pyranonigrin J. The methyltransferase pynC then coverts pyranonigrin J to pyranonigrin I via N-methylation. The FAD-dependent monooxygenase pynG catalyzes an epoxidation-mediated cyclization to form the dihydro-gamma-pyrone moiety, followed by pynD-catalyzed oxidation of the alcohol to the ketone and enolization to yield the characteristic tetramic acid-fused gamma-pyrone core of pyranonigrin H. Pyranonigrin H is substrate of pynH for dehydration-mediated exo-methylene formation from the serine side chain to produce pyranonigrin E, before the oxidase pynE reduces the exo-methylene of pyranonigrin E into a pendant methyl to form pyranonigrin G. The FAD-linked oxidoreductase pynB performs the reverse reaction and converts pyranonigrin G back to pyranonigrin E. The polypeptide is Hybrid PKS-NRPS synthetase pynA (Aspergillus niger (strain ATCC MYA-4892 / CBS 513.88 / FGSC A1513)).